The primary structure comprises 379 residues: Armadillo repeat-containing X-linked protein 3 (379 aa).

Residues 1–6 (MGYARK) lie on the Mitochondrial intermembrane side of the membrane. 2 mitochondrion outer membrane (MOM)-targeting sequence regions span residues 1 to 6 (MGYARK) and 26 to 37 (RLTRGRKQNKEK). Residues 7–29 (VGWVTAGLVIGAGACYCIYRLTR) traverse the membrane as a helical; Signal-anchor segment. Topologically, residues 30–379 (GRKQNKEKMA…TERMFPKSQE (350 aa)) are cytoplasmic. 3 positions are modified to phosphoserine: serine 61, serine 67, and serine 72. The segment at 89 to 98 (RARARARARA) is nuclear localization signal. Residues 95–106 (RARATRARRAVQ) are compositionally biased toward basic residues. The tract at residues 95 to 116 (RARATRARRAVQKRASPNSDDT) is disordered. Serine 110 is subject to Phosphoserine. 3 ARM repeats span residues 111–151 (PNSD…NNAA), 153–192 (AFNRDIIRDLGGLPIVAKILNTRDPIVKEKALIVLNNLSV), and 233–272 (VTNEYQHILANSISDFFRLFSAGNEETKLQVLKLLLNLAE).

It belongs to the eutherian X-chromosome-specific Armcx family. As to quaternary structure, interacts (via ARM domain) with MIRO1, MIRO2 and TRAK2. The interaction with Miro is calcium-dependent. Interacts with Sox10. As to expression, highly expressed in the developing neural tissues, neural crest derivatives and hind limbs. Also widely expressed in the adult nervous tissue, especially in the forebrain, including the cerebral cortex, hippocampus and thalamus.

It is found in the mitochondrion outer membrane. It localises to the cytoplasm. Its subcellular location is the nucleus. In terms of biological role, regulates mitochondrial aggregation and transport in axons in living neurons. May link mitochondria to the Trak2-kinesin motor complex via its interaction with Miro and Trak2. Mitochondrial distribution and dynamics is regulated through Armcx3 protein degradation, which is promoted by PCK and negatively regulated by Wnt1. Enhances the Sox10-mediated transactivation of the neuronal acetylcholine receptor subunit alpha-3 and beta-4 subunit gene promoters. This Mus musculus (Mouse) protein is Armadillo repeat-containing X-linked protein 3 (Armcx3).